The chain runs to 184 residues: Large ribosomal subunit protein uL6 (184 aa).

This sequence belongs to the universal ribosomal protein uL6 family. As to quaternary structure, part of the 50S ribosomal subunit.

This protein binds to the 23S rRNA, and is important in its secondary structure. It is located near the subunit interface in the base of the L7/L12 stalk, and near the tRNA binding site of the peptidyltransferase center. In Cytophaga hutchinsonii (strain ATCC 33406 / DSM 1761 / CIP 103989 / NBRC 15051 / NCIMB 9469 / D465), this protein is Large ribosomal subunit protein uL6.